A 1006-amino-acid polypeptide reads, in one-letter code: Cytosolic carboxypeptidase 3 (1006 aa).

One can recognise a Peptidase M14 domain in the interval 304–576; sequence YPYTYSNLQE…HFCDSLLDYC (273 aa). Residues histidine 368, glutamate 371, and histidine 464 each coordinate Zn(2+). The active-site Proton donor/acceptor is the glutamate 540. The segment at 790-810 is disordered; it reads ESHHQLKSKAKRCSSFQSKRT.

It belongs to the peptidase M14 family. It depends on Zn(2+) as a cofactor. In terms of tissue distribution, widely expressed. Expressed abundantly in tissues with m otile cilia such as testis, lung and trachea. Abundantly expressed in pituitary and kidney, moderately expressed in brain, eye, fat, pancreas, stomach, and adrenal.

Its subcellular location is the cytoplasm. It is found in the cytosol. The enzyme catalyses (L-glutamyl)(n+1)-gamma-L-glutamyl-L-glutamyl-[protein] + H2O = (L-glutamyl)(n)-gamma-L-glutamyl-L-glutamyl-[protein] + L-glutamate. Metallocarboxypeptidase that mediates deglutamylation of tubulin and non-tubulin target proteins. Catalyzes the removal of polyglutamate side chains present on the gamma-carboxyl group of glutamate residues within the C-terminal tail of tubulin protein. Specifically cleaves tubulin long-side-chains, while it is not able to remove the branching point glutamate. Also catalyzes the removal of polyglutamate residues from the carboxy-terminus of non-tubulin proteins such as MYLK. May catalyze the hydrolysis of aspartate from the carboxy-terminus of target proteins. Does not show detyrosinase or deglycylase activities from the carboxy-terminus of target proteins. The chain is Cytosolic carboxypeptidase 3 from Mus musculus (Mouse).